A 277-amino-acid polypeptide reads, in one-letter code: Large ribosomal subunit protein uL2c (277 aa).

The segment at 228–254 is disordered; the sequence is VDHPHGGGEGRCPVGHAQPRTPWGKPA.

Belongs to the universal ribosomal protein uL2 family. Part of the 50S ribosomal subunit.

Its subcellular location is the plastid. The protein localises to the chloroplast. The sequence is that of Large ribosomal subunit protein uL2c (rpl2) from Ostreococcus tauri.